The primary structure comprises 78 residues: D-alanyl carrier protein (78 aa).

One can recognise a Carrier domain in the interval 1–78 (MEFKNQVYGI…HIAEQLAEMK (78 aa)). Ser36 carries the post-translational modification O-(pantetheine 4'-phosphoryl)serine.

Belongs to the DltC family. 4'-phosphopantetheine is transferred from CoA to a specific serine of apo-DCP.

The protein localises to the cytoplasm. It functions in the pathway cell wall biogenesis; lipoteichoic acid biosynthesis. Its function is as follows. Carrier protein involved in the D-alanylation of lipoteichoic acid (LTA). The loading of thioester-linked D-alanine onto DltC is catalyzed by D-alanine--D-alanyl carrier protein ligase DltA. The DltC-carried D-alanyl group is further transferred to cell membrane phosphatidylglycerol (PG) by forming an ester bond, probably catalyzed by DltD. D-alanylation of LTA plays an important role in modulating the properties of the cell wall in Gram-positive bacteria, influencing the net charge of the cell wall. The polypeptide is D-alanyl carrier protein (Bacillus pumilus (strain SAFR-032)).